Consider the following 430-residue polypeptide: Phosphoserine aminotransferase 1, chloroplastic (430 aa).

The N-terminal 51 residues, 1–51 (MAATTNSFLVGSNNTQIPALKPKSSSQSFLHLSKPNTVNFVSKTKPVAVRC), are a transit peptide targeting the chloroplast. The residue at position 52 (Val-52) is an N-acetylvaline. Arg-111 contributes to the L-glutamate binding site. Pyridoxal 5'-phosphate is bound by residues 145–146 (AT), Trp-171, Thr-221, Asp-241, and Gln-264. At Lys-265 the chain carries N6-(pyridoxal phosphate)lysine. 306 to 307 (NT) serves as a coordination point for pyridoxal 5'-phosphate.

The protein belongs to the class-V pyridoxal-phosphate-dependent aminotransferase family. SerC subfamily. Homodimer. It depends on pyridoxal 5'-phosphate as a cofactor. In terms of tissue distribution, ubiquitous, but expressed preferentially in light-grown roots and shoots. Detected in root meristems and in root tissues surrounding the vascular bundle.

The protein resides in the plastid. The protein localises to the chloroplast. It carries out the reaction O-phospho-L-serine + 2-oxoglutarate = 3-phosphooxypyruvate + L-glutamate. The catalysed reaction is 4-(phosphooxy)-L-threonine + 2-oxoglutarate = (R)-3-hydroxy-2-oxo-4-phosphooxybutanoate + L-glutamate. It functions in the pathway amino-acid biosynthesis; L-serine biosynthesis; L-serine from 3-phospho-D-glycerate: step 2/3. The protein operates within cofactor biosynthesis; pyridoxine 5'-phosphate biosynthesis; pyridoxine 5'-phosphate from D-erythrose 4-phosphate: step 3/5. With respect to regulation, inhibited by high concentration of cysteine and by 3-phosphonooxypyruvate. Not inhibited by serine, threonine, valine, glycine, tryptophan and O-acetyl-L-serine. In terms of biological role, involved in the plastidial phosphorylated pathway of serine biosynthesis (PPSB). Catalyzes the reversible conversion of 3-phosphohydroxypyruvate to phosphoserine. This is Phosphoserine aminotransferase 1, chloroplastic from Arabidopsis thaliana (Mouse-ear cress).